A 148-amino-acid polypeptide reads, in one-letter code: SsrA-binding protein (148 aa).

A compositionally biased stretch (basic and acidic residues) spans 129–142 (ETEKKRDWEREKAR). The segment at 129-148 (ETEKKRDWEREKARIMRAGT) is disordered.

This sequence belongs to the SmpB family.

The protein resides in the cytoplasm. Its function is as follows. Required for rescue of stalled ribosomes mediated by trans-translation. Binds to transfer-messenger RNA (tmRNA), required for stable association of tmRNA with ribosomes. tmRNA and SmpB together mimic tRNA shape, replacing the anticodon stem-loop with SmpB. tmRNA is encoded by the ssrA gene; the 2 termini fold to resemble tRNA(Ala) and it encodes a 'tag peptide', a short internal open reading frame. During trans-translation Ala-aminoacylated tmRNA acts like a tRNA, entering the A-site of stalled ribosomes, displacing the stalled mRNA. The ribosome then switches to translate the ORF on the tmRNA; the nascent peptide is terminated with the 'tag peptide' encoded by the tmRNA and targeted for degradation. The ribosome is freed to recommence translation, which seems to be the essential function of trans-translation. The protein is SsrA-binding protein of Burkholderia orbicola (strain AU 1054).